The primary structure comprises 306 residues: tRNA (guanine-N(1)-)-methyltransferase (306 aa).

Residues Gly-157 and Ile-182 to Leu-187 each bind S-adenosyl-L-methionine.

This sequence belongs to the RNA methyltransferase TrmD family. As to quaternary structure, homodimer.

Its subcellular location is the cytoplasm. The enzyme catalyses guanosine(37) in tRNA + S-adenosyl-L-methionine = N(1)-methylguanosine(37) in tRNA + S-adenosyl-L-homocysteine + H(+). Its function is as follows. Specifically methylates guanosine-37 in various tRNAs. The sequence is that of tRNA (guanine-N(1)-)-methyltransferase from Bifidobacterium adolescentis (strain ATCC 15703 / DSM 20083 / NCTC 11814 / E194a).